The chain runs to 471 residues: Ribulose bisphosphate carboxylase large chain (471 aa).

N115 and T165 together coordinate substrate. K167 (proton acceptor) is an active-site residue. Position 169 (K169) interacts with substrate. Positions 193, 195, and 196 each coordinate Mg(2+). K193 bears the N6-carboxylysine mark. The active-site Proton acceptor is H286. Residues R287, H319, and S371 each contribute to the substrate site.

It belongs to the RuBisCO large chain family. Type I subfamily. As to quaternary structure, heterohexadecamer of 8 large chains and 8 small chains. Mg(2+) is required as a cofactor.

The protein resides in the carboxysome. The enzyme catalyses 2 (2R)-3-phosphoglycerate + 2 H(+) = D-ribulose 1,5-bisphosphate + CO2 + H2O. It catalyses the reaction D-ribulose 1,5-bisphosphate + O2 = 2-phosphoglycolate + (2R)-3-phosphoglycerate + 2 H(+). Functionally, ruBisCO catalyzes two reactions: the carboxylation of D-ribulose 1,5-bisphosphate, the primary event in carbon dioxide fixation, as well as the oxidative fragmentation of the pentose substrate in the photorespiration process. Both reactions occur simultaneously and in competition at the same active site. The polypeptide is Ribulose bisphosphate carboxylase large chain (Synechococcus sp. (strain CC9605)).